A 135-amino-acid polypeptide reads, in one-letter code: UPF0355 protein MRSA252 (135 aa).

This sequence belongs to the UPF0355 family.

The polypeptide is UPF0355 protein MRSA252 (Staphylococcus aureus (strain MRSA252)).